Reading from the N-terminus, the 1427-residue chain is Protein expanded (1427 aa).

Residues 26–399 (RFLALRLLGQ…DTHQWSMKLA (374 aa)) form the FERM domain. The segment at 176-212 (GDAPPGTSNSKDDSGEETSASPSNGGRGLSATTTLPK) is disordered. Polar residues predominate over residues 192 to 211 (ETSASPSNGGRGLSATTTLP). 2 positions are modified to phosphotyrosine: Tyr227 and Tyr423. Disordered stretches follow at residues 520–566 (VRPQ…IGSQ) and 611–656 (NSAL…SGVY). Polar residues predominate over residues 524-544 (DASSNGATIVTNSSVQRNSMG). Positions 545–559 (TTANDSSTATDSPSS) are enriched in low complexity. A Phosphotyrosine modification is found at Tyr679. Residues 688–710 (EETHVQHSDSVDGKKKEDFRPRS) are compositionally biased toward basic and acidic residues. 5 disordered regions span residues 688–732 (EETH…DNKH), 766–792 (YVTLPLGDQGEEEVDQPPAPPPPYSAR), 815–880 (APKP…SLKS), 939–963 (HNSNYAGGSQASLHHHHVPSHHRHS), and 1000–1022 (LAPPPPSLPRQPPPPPPPNHPHL). Tyr766 carries the phosphotyrosine modification. Over residues 818 to 838 (PDSPPCSPPVPPAPIPAPPPA) the composition is skewed to pro residues. Positions 842–847 (RDPPPY) match the RXPPXY motif motif. Residues 848–859 (SISSKPRPTSLI) show a composition bias toward polar residues. Low complexity predominate over residues 860 to 877 (SVSSSAHPAPSAAGSMSS). Over residues 951 to 963 (LHHHHVPSHHRHS) the composition is skewed to basic residues. The span at 1001–1019 (APPPPSLPRQPPPPPPPNH) shows a compositional bias: pro residues. Residues 1008–1020 (PRQPPPPPPPNHP) carry the SH3-binding motif. Tyr1103 carries the post-translational modification Phosphotyrosine. Residues 1149–1157 (PPPPPPLHP) carry the SH3-binding motif. Phosphoserine is present on Ser1181. 2 disordered regions span residues 1190–1267 (DLLP…WAGE) and 1345–1398 (TGQE…LPVQ). Pro residues-rich tracts occupy residues 1214–1230 (PPMPAPSEKPPPIPSKP) and 1237–1246 (PIPPRKPPTL). Composition is skewed to polar residues over residues 1253 to 1262 (SPLTKTSSGA) and 1345 to 1370 (TGQEMPTSSAQPSGATTNGVANSSAG). Positions 1376-1388 (KARKGSTVSHRHP) are enriched in basic residues.

As to quaternary structure, forms a complex with Kibra and Mer. Interacts (via RXPPXY motif) with Kibra (via domain WW 1). Interacts with Mer and Hpo (via SARAH domain). Interacts with Schip1; the interaction results in recruitment of Schip1 to the apical cell membrane. Interacts with ack and yki. Post-translationally, phosphorylated by Ack at several tyrosines including Tyr-227, Tyr-423, Tyr-679, Tyr-766 and Tyr-1103.

The protein resides in the apical cell membrane. Its function is as follows. Activates the Hippo/SWH (Sav/Wts/Hpo) signaling pathway, a signaling pathway that plays a pivotal role in organ size control and tumor suppression by restricting proliferation and promoting apoptosis. The core of this pathway is composed of a kinase cascade wherein Hippo (Hpo), in complex with its regulatory protein Salvador (Sav), phosphorylates and activates Warts (Wts) in complex with its regulatory protein Mats, which in turn phosphorylates and inactivates the Yorkie (Yki) oncoprotein. Ex acts synergistically along with Mer and Kibra to regulate the Hippo signaling pathway. Involved in the control of cell proliferation in imaginal disks. May bind to certain proteins of signal transduction pathways by interaction with their SH3 domains. Required for apical localization of Schip1. The polypeptide is Protein expanded (ex) (Drosophila melanogaster (Fruit fly)).